We begin with the raw amino-acid sequence, 1030 residues long: Exportin-T (1030 aa).

This sequence belongs to the exportin family.

It is found in the nucleus. The protein localises to the cytoplasm. Its function is as follows. tRNA nucleus export receptor which facilitates tRNA translocation across the nuclear pore complex. Involved in pre-tRNA splicing, probably by affecting the interaction of pre-tRNA with splicing endonuclease. The chain is Exportin-T (los1) from Aspergillus niger (strain ATCC MYA-4892 / CBS 513.88 / FGSC A1513).